A 126-amino-acid chain; its full sequence is Flagellar protein FliT (126 aa).

Residues 1-50 (MVSPHRLLKDYQQLLSLSQKILHLAISGQWDTLVEQEIVYVQSVEGLVNT) form a required for homodimerization region. The tract at residues 60-98 (MRLHLRQILQEVMDNEAKVKQLLQKRMDELSSLMGQSLK) is fliD binding.

The protein belongs to the FliT family. As to quaternary structure, homodimer. Interacts with FliD and FlhC.

The protein localises to the cytoplasm. Its subcellular location is the cytosol. In terms of biological role, dual-function protein that regulates the transcription of class 2 flagellar operons and that also acts as an export chaperone for the filament-capping protein FliD. As a transcriptional regulator, acts as an anti-FlhDC factor; it directly binds FlhC, thus inhibiting the binding of the FlhC/FlhD complex to class 2 promoters, resulting in decreased expression of class 2 flagellar operons. As a chaperone, effects FliD transition to the membrane by preventing its premature polymerization, and by directing it to the export apparatus. The polypeptide is Flagellar protein FliT (Pectobacterium atrosepticum (strain SCRI 1043 / ATCC BAA-672) (Erwinia carotovora subsp. atroseptica)).